Here is a 480-residue protein sequence, read N- to C-terminus: Ribulose bisphosphate carboxylase large chain (480 aa).

Residues 1-2 (MS) constitute a propeptide that is removed on maturation. Pro3 carries the N-acetylproline modification. The residue at position 14 (Lys14) is an N6,N6,N6-trimethyllysine. Substrate contacts are provided by Asn123 and Thr173. Lys175 serves as the catalytic Proton acceptor. Substrate is bound at residue Lys177. Residues Lys201, Asp203, and Glu204 each contribute to the Mg(2+) site. An N6-carboxylysine modification is found at Lys201. Catalysis depends on His294, which acts as the Proton acceptor. Positions 295, 327, and 379 each coordinate substrate.

Belongs to the RuBisCO large chain family. Type I subfamily. In terms of assembly, heterohexadecamer of 8 large chains and 8 small chains; disulfide-linked. The disulfide link is formed within the large subunit homodimers. The cofactor is Mg(2+). The disulfide bond which can form in the large chain dimeric partners within the hexadecamer appears to be associated with oxidative stress and protein turnover.

It is found in the plastid. The protein localises to the chloroplast. It catalyses the reaction 2 (2R)-3-phosphoglycerate + 2 H(+) = D-ribulose 1,5-bisphosphate + CO2 + H2O. The enzyme catalyses D-ribulose 1,5-bisphosphate + O2 = 2-phosphoglycolate + (2R)-3-phosphoglycerate + 2 H(+). Functionally, ruBisCO catalyzes two reactions: the carboxylation of D-ribulose 1,5-bisphosphate, the primary event in carbon dioxide fixation, as well as the oxidative fragmentation of the pentose substrate in the photorespiration process. Both reactions occur simultaneously and in competition at the same active site. This chain is Ribulose bisphosphate carboxylase large chain, found in Basella alba (Malabar spinach).